Reading from the N-terminus, the 341-residue chain is Cathepsin B-like cysteine proteinase 1 (341 aa).

The signal sequence occupies residues 1 to 19 (MKYLFFALCLYLYQGISEA). The propeptide at 20-88 (EVPAEQIPLE…VEDEELEENN (69 aa)) is activation peptide. N-linked (GlcNAc...) asparagine glycosylation occurs at Asn-103. Intrachain disulfides connect Cys-104/Cys-133, Cys-116/Cys-160, Cys-152/Cys-218, Cys-153/Cys-156, Cys-189/Cys-222, and Cys-197/Cys-209. The active site involves Cys-119. A glycan (N-linked (GlcNAc...) asparagine) is linked at Asn-202. Residues His-288 and Asn-308 contribute to the active site.

It belongs to the peptidase C1 family.

Functionally, expression of the protease correlates with blood-feeding and suggests a role for the protease in blood digestion. In Ostertagia ostertagi (Brown stomach worm), this protein is Cathepsin B-like cysteine proteinase 1 (CP-1).